The following is a 75-amino-acid chain: Translational regulator CsrA (75 aa).

The protein belongs to the CsrA/RsmA family. Homodimer; the beta-strands of each monomer intercalate to form a hydrophobic core, while the alpha-helices form wings that extend away from the core.

It is found in the cytoplasm. In terms of biological role, a translational regulator that binds mRNA to regulate translation initiation and/or mRNA stability. Usually binds in the 5'-UTR at or near the Shine-Dalgarno sequence preventing ribosome-binding, thus repressing translation. Its main target seems to be the major flagellin gene, while its function is anatagonized by FliW. This chain is Translational regulator CsrA, found in Treponema denticola (strain ATCC 35405 / DSM 14222 / CIP 103919 / JCM 8153 / KCTC 15104).